The primary structure comprises 404 residues: Multidrug resistance protein MdtG (404 aa).

The next 11 membrane-spanning stretches (helical) occupy residues 19–39, 56–76, 90–110, 113–133, 144–164, 171–191, 222–242, 254–274, 288–308, 317–337, and 376–396; these read LGCF…PLYV, LVFS…GGLA, LGMA…QFLI, ALLG…ATQV, TLST…GLLA, PVFF…FFFI, LFVT…ILTL, IAFI…LSAP, ILIV…FVQT, FLLG…LVYN, and AVFC…WNSL.

The protein belongs to the major facilitator superfamily. DHA1 family. MdtG (TC 2.A.1.2.20) subfamily.

It is found in the cell inner membrane. This chain is Multidrug resistance protein MdtG, found in Salmonella arizonae (strain ATCC BAA-731 / CDC346-86 / RSK2980).